The following is a 472-amino-acid chain: uncharacterized protein (472 aa).

The next 6 membrane-spanning stretches (helical) occupy residues 4-24, 27-47, 56-76, 99-119, 140-160, and 176-196; these read IIIL…FSVI, APIC…LPFF, AGFI…GKVV, ILAI…LFVV, LIPG…LPGT, and IYAA…AGML. Positions 209 to 229 are disordered; it reads GEGYGGFDSQNAPAPESIESA. The segment covering 220-229 has biased composition (low complexity); the sequence is APAPESIESA. 5 helical membrane passes run 240–260, 286–306, 323–343, 372–392, and 448–468; these read ALAF…TIYL, AAAI…TILF, IGGA…GGII, TALA…LSAM, and IFAI…IYSL.

This sequence belongs to the CitM (TC 2.A.11) transporter family.

It is found in the cell membrane. This is an uncharacterized protein from Bacillus subtilis (strain 168).